The sequence spans 394 residues: Stabilizer of axonemal microtubules 2 (394 aa).

6 mn regions span residues 110–122 (STTF…PQEI), 144–158 (DTSH…QLEV), 244–256 (NSTS…PYQA), 278–292 (KSTT…EICR), 312–324 (LSTF…PHEL), and 346–360 (VTMY…KQEI).

The protein belongs to the FAM154 family.

In Mus musculus (Mouse), this protein is Stabilizer of axonemal microtubules 2 (Saxo2).